Consider the following 551-residue polypeptide: Glucans biosynthesis protein D (551 aa).

Positions 1–32 (MNRRRFIKASLALAAACGTPGLATLFSRNAWA) form a signal peptide, tat-type signal.

The protein belongs to the OpgD/OpgG family. Post-translationally, predicted to be exported by the Tat system. The position of the signal peptide cleavage has not been experimentally proven.

Its subcellular location is the periplasm. It functions in the pathway glycan metabolism; osmoregulated periplasmic glucan (OPG) biosynthesis. Its function is as follows. Probably involved in the control of the structural glucose backbone of osmoregulated periplasmic glucans (OPGs). This Cronobacter sakazakii (strain ATCC BAA-894) (Enterobacter sakazakii) protein is Glucans biosynthesis protein D.